Here is a 67-residue protein sequence, read N- to C-terminus: Theromin (67 aa).

Positions 2 to 27 (CENTECPRACPGEYEFDEDGCNTCVC) constitute an Antistasin-like domain.

Homodimer. In terms of processing, eight disulfide bonds are present.

It is found in the secreted. Functionally, potent thrombin-specific inhibitor. In Theromyzon tessulatum (Duck leech), this protein is Theromin.